A 513-amino-acid chain; its full sequence is NAD(P)H-quinone oxidoreductase subunit 2, chloroplastic (513 aa).

14 helical membrane-spanning segments follow: residues 11–31 (NLITILPECVLIICLLTILMI), 38–58 (SVWLSNIALLGLLTSTFILLF), 78–98 (GFTIAFRCLLTLSSALCIPLS), 112–132 (FLILLLTATLGGMFLCGANDL), 133–153 (VTIFVSLECLSLSSYLLAGQA), 167–187 (LLMGGASSSILVYGFSWLYGL), 219–239 (FGALGLWVAFVCILVGIGFKI), 256–276 (PTPVVAFLSVGSKAAGLALAT), 290–310 (WHIVLEIVAFLSMVFGNLIAA), 318–338 (MLAYSSISQAGYLLIAILVGN), 348–368 (YLLIYTFMNLGAFACTVIFGL), 389–409 (AFALSICLLSLAGMPPLAGFF), 422–442 (HLYLLVYTGLITSVISLYYYL), and 478–498 (LGLTLCVLASSILGFFMNPLI).

The protein belongs to the complex I subunit 2 family. As to quaternary structure, NDH is composed of at least 16 different subunits, 5 of which are encoded in the nucleus.

The protein localises to the plastid. It is found in the chloroplast thylakoid membrane. It catalyses the reaction a plastoquinone + NADH + (n+1) H(+)(in) = a plastoquinol + NAD(+) + n H(+)(out). It carries out the reaction a plastoquinone + NADPH + (n+1) H(+)(in) = a plastoquinol + NADP(+) + n H(+)(out). In terms of biological role, NDH shuttles electrons from NAD(P)H:plastoquinone, via FMN and iron-sulfur (Fe-S) centers, to quinones in the photosynthetic chain and possibly in a chloroplast respiratory chain. The immediate electron acceptor for the enzyme in this species is believed to be plastoquinone. Couples the redox reaction to proton translocation, and thus conserves the redox energy in a proton gradient. The sequence is that of NAD(P)H-quinone oxidoreductase subunit 2, chloroplastic from Staurastrum punctulatum (Green alga).